Consider the following 224-residue polypeptide: Triosephosphate isomerase (224 aa).

Substrate is bound at residue 9-11 (NFK). Catalysis depends on His-93, which acts as the Electrophile. Glu-141 functions as the Proton acceptor in the catalytic mechanism. Residues Ile-146, Gly-181, and 202–203 (AS) each bind substrate.

The protein belongs to the triosephosphate isomerase family. Homotetramer; dimer of dimers.

The protein resides in the cytoplasm. It carries out the reaction D-glyceraldehyde 3-phosphate = dihydroxyacetone phosphate. It functions in the pathway carbohydrate biosynthesis; gluconeogenesis. The protein operates within carbohydrate degradation; glycolysis; D-glyceraldehyde 3-phosphate from glycerone phosphate: step 1/1. Its function is as follows. Involved in the gluconeogenesis. Catalyzes stereospecifically the conversion of dihydroxyacetone phosphate (DHAP) to D-glyceraldehyde-3-phosphate (G3P). The chain is Triosephosphate isomerase from Pyrobaculum arsenaticum (strain DSM 13514 / JCM 11321 / PZ6).